The chain runs to 123 residues: Large ribosomal subunit protein uL14c (123 aa).

This sequence belongs to the universal ribosomal protein uL14 family. As to quaternary structure, part of the 50S ribosomal subunit.

It is found in the plastid. The protein localises to the chloroplast. Its function is as follows. Binds to 23S rRNA. The protein is Large ribosomal subunit protein uL14c of Sorghum bicolor (Sorghum).